The primary structure comprises 148 residues: UPF0260 protein PC1_1943 (148 aa).

It belongs to the UPF0260 family.

The protein is UPF0260 protein PC1_1943 of Pectobacterium carotovorum subsp. carotovorum (strain PC1).